A 1407-amino-acid polypeptide reads, in one-letter code: MKDLLKFLKAQTKTEEFDAIKIALASPDMIRSWSFGEVKKPETINYRTFKPERDGLFCARIFGPVKDYECLCGKYKRLKHRGVICEKCGVEVTQTKVRRERMGHIELASPTAHIWFLKSLPSRIGLLLDMPLRDIERVLYFESYVVIEGGMTNLERQQILTEEQYLDALEEFGDEFDAKMGAEAIQALLKSMDLEQECEQLREELNETNSETKRKKLTKRIKLLEAFVQSGNKPEWMILTVLPVLPPDLRPLVPLDGGRFATSDLNDLYRRVINRNNRLKRLLDLAAPDIIVRNEKRMLQEAVDALLDNGRRGRAITGSNKRPLKSLADMIKGKQGRFRQNLLGKRVDYSGRSVITVGPYLRLHQCGLPKKMALELFKPFIYGKLELRGLATTIKAAKKMVEREEAVVWDILDEVIREHPVLLNRAPTLHRLGIQAFEPVLIEGKAIQLHPLVCAAYNADFDGDQMAVHVPLTLEAQLEARALMMSTNNILSPANGEPIIVPSQDVVLGLYYMTRDCVNAKGEGMVLTGPKEAERLYRSGLASLHARVKVRITEYEKDANGELVAKTSLKDTTVGRAILWMIVPKGLPYSIVNQALGKKAISKMLNTCYRILGLKPTVIFADQIMYTGFAYAARSGASVGIDDMVIPEKKHEIISEAEAEVAEIQEQFQSGLVTAGERYNKVIDIWAAANDRVSKAMMDNLQTETVINRDGQEEKQVSFNSIYMMADSGARGSAAQIRQLAGMRGLMAKPDGSIIETPITANFREGLNVLQYFISTHGARKGLADTALKTANSGYLTRRLVDVAQDLVVTEDDRGTHEGIMMTPVIEGGDVKEPLRDRVLGRVTAEDVLKPGTADILVPRNTLLHEQWCDLLEENSVDAVKVRSVVSCDTDFGVCAHCYGRDLARGHIINKGEAIGVIAAQSIGEPGTQLTMRTFHIGGAASRAAAESSIQVKNKGSIKLSNVKSVVNSSGKLVITSRNTELKLIDEFGRTKESYKVPYGAVLAKGDGEQVAGGETVANWDPHTMPVITEVSGFVRFTDMIDGQTITRQTDELTGLSSLVVLDSAERTAGGKDLRPALKIVDAQGNDVLIPGTDMPAQYFLPGKAIVQLEDGVQISSGDTLARIPQESGGTKDITGGLPRVADLFEARRPKEPAILAEISGIVSFGKETKGKRRLVITPVDGSDPYEEMIPKWRQLNVFEGERVERGDVISDGPEAPHDILRLRGVHAVTRYIVNEVQDVYRLQGVKINDKHIEVIVRQMLRKATIVNAGSSDFLEGEQVEYSRVKIANRELEANGKVGATYSRDLLGITKASLATESFISAASFQETTRVLTEAAVAGKRDELRGLKENVIVGRLIPAGTGYAYHQDRMRRRAAGEAPAAPQVTAEDASASLAELLNAGLGGSDNE.

Residues cysteine 70, cysteine 72, cysteine 85, and cysteine 88 each coordinate Zn(2+). Mg(2+)-binding residues include aspartate 460, aspartate 462, and aspartate 464. Lysine 972 bears the N6-acetyllysine mark.

Belongs to the RNA polymerase beta' chain family. In terms of assembly, the RNAP catalytic core consists of 2 alpha, 1 beta, 1 beta' and 1 omega subunit. When a sigma factor is associated with the core the holoenzyme is formed, which can initiate transcription. It depends on Mg(2+) as a cofactor. Requires Zn(2+) as cofactor.

It carries out the reaction RNA(n) + a ribonucleoside 5'-triphosphate = RNA(n+1) + diphosphate. DNA-dependent RNA polymerase catalyzes the transcription of DNA into RNA using the four ribonucleoside triphosphates as substrates. The protein is DNA-directed RNA polymerase subunit beta' of Escherichia coli O6:K15:H31 (strain 536 / UPEC).